The following is a 240-amino-acid chain: tRNA1(Val) (adenine(37)-N6)-methyltransferase (240 aa).

It belongs to the methyltransferase superfamily. tRNA (adenine-N(6)-)-methyltransferase family.

Its subcellular location is the cytoplasm. It catalyses the reaction adenosine(37) in tRNA1(Val) + S-adenosyl-L-methionine = N(6)-methyladenosine(37) in tRNA1(Val) + S-adenosyl-L-homocysteine + H(+). Specifically methylates the adenine in position 37 of tRNA(1)(Val) (anticodon cmo5UAC). This is tRNA1(Val) (adenine(37)-N6)-methyltransferase from Photobacterium profundum (strain SS9).